A 131-amino-acid polypeptide reads, in one-letter code: Small ribosomal subunit protein uS11 (131 aa).

Belongs to the universal ribosomal protein uS11 family. As to quaternary structure, part of the 30S ribosomal subunit. Interacts with proteins S7 and S18. Binds to IF-3.

Its function is as follows. Located on the platform of the 30S subunit, it bridges several disparate RNA helices of the 16S rRNA. Forms part of the Shine-Dalgarno cleft in the 70S ribosome. This Helicobacter pylori (strain ATCC 700392 / 26695) (Campylobacter pylori) protein is Small ribosomal subunit protein uS11.